The primary structure comprises 363 residues: Dihydroorotate dehydrogenase (quinone) (363 aa).

FMN contacts are provided by residues 70 to 74 and Thr94; that span reads AGFDK. Substrate is bound at residue Lys74. 119 to 123 serves as a coordination point for substrate; it reads NRMGF. Asn147 and Asn180 together coordinate FMN. Residue Asn180 coordinates substrate. The Nucleophile role is filled by Ser183. Asn185 contributes to the substrate binding site. 2 residues coordinate FMN: Lys216 and Thr244. Residue 245–246 coordinates substrate; that stretch reads NT. FMN-binding positions include Gly270, Gly299, and 320 to 321; that span reads YT.

The protein belongs to the dihydroorotate dehydrogenase family. Type 2 subfamily. As to quaternary structure, monomer. FMN is required as a cofactor.

Its subcellular location is the cell membrane. The catalysed reaction is (S)-dihydroorotate + a quinone = orotate + a quinol. The protein operates within pyrimidine metabolism; UMP biosynthesis via de novo pathway; orotate from (S)-dihydroorotate (quinone route): step 1/1. Functionally, catalyzes the conversion of dihydroorotate to orotate with quinone as electron acceptor. This chain is Dihydroorotate dehydrogenase (quinone), found in Corynebacterium diphtheriae (strain ATCC 700971 / NCTC 13129 / Biotype gravis).